Consider the following 480-residue polypeptide: Aspartyl/glutamyl-tRNA(Asn/Gln) amidotransferase subunit B (480 aa).

Belongs to the GatB/GatE family. GatB subfamily. In terms of assembly, heterotrimer of A, B and C subunits.

It carries out the reaction L-glutamyl-tRNA(Gln) + L-glutamine + ATP + H2O = L-glutaminyl-tRNA(Gln) + L-glutamate + ADP + phosphate + H(+). The catalysed reaction is L-aspartyl-tRNA(Asn) + L-glutamine + ATP + H2O = L-asparaginyl-tRNA(Asn) + L-glutamate + ADP + phosphate + 2 H(+). Allows the formation of correctly charged Asn-tRNA(Asn) or Gln-tRNA(Gln) through the transamidation of misacylated Asp-tRNA(Asn) or Glu-tRNA(Gln) in organisms which lack either or both of asparaginyl-tRNA or glutaminyl-tRNA synthetases. The reaction takes place in the presence of glutamine and ATP through an activated phospho-Asp-tRNA(Asn) or phospho-Glu-tRNA(Gln). In Streptococcus pneumoniae serotype 4 (strain ATCC BAA-334 / TIGR4), this protein is Aspartyl/glutamyl-tRNA(Asn/Gln) amidotransferase subunit B.